Consider the following 425-residue polypeptide: Serine hydroxymethyltransferase (425 aa).

(6S)-5,6,7,8-tetrahydrofolate is bound by residues L128 and 132–134 (GHL). K237 carries the post-translational modification N6-(pyridoxal phosphate)lysine.

The protein belongs to the SHMT family. In terms of assembly, homodimer. Pyridoxal 5'-phosphate serves as cofactor.

It localises to the cytoplasm. It catalyses the reaction (6R)-5,10-methylene-5,6,7,8-tetrahydrofolate + glycine + H2O = (6S)-5,6,7,8-tetrahydrofolate + L-serine. Its pathway is one-carbon metabolism; tetrahydrofolate interconversion. It participates in amino-acid biosynthesis; glycine biosynthesis; glycine from L-serine: step 1/1. Catalyzes the reversible interconversion of serine and glycine with tetrahydrofolate (THF) serving as the one-carbon carrier. This reaction serves as the major source of one-carbon groups required for the biosynthesis of purines, thymidylate, methionine, and other important biomolecules. Also exhibits THF-independent aldolase activity toward beta-hydroxyamino acids, producing glycine and aldehydes, via a retro-aldol mechanism. The sequence is that of Serine hydroxymethyltransferase from Wolbachia pipientis wMel.